The following is a 236-amino-acid chain: T-cell surface glycoprotein CD8 alpha chain (236 aa).

Positions 1 to 26 are cleaved as a signal peptide; the sequence is MASRVICFLSLNLLLLDVITRLQVSG. An Ig-like V-type domain is found at 27-130; that stretch reads QLQLSPKKVD…ITSNSVMYFS (104 aa). The Extracellular segment spans residues 27–189; sequence QLQLSPKKVD…MGLGFACDIY (163 aa). Cysteine 47 and cysteine 119 are disulfide-bonded. N-linked (GlcNAc...) asparagine glycosylation is present at asparagine 63. An O-linked (GalNAc...) threonine; partial glycan is attached at threonine 144. Threonine 148, threonine 152, threonine 158, and threonine 160 each carry an O-linked (GalNAc...) threonine glycan. Residues 150-170 form a disordered region; sequence APTPVPPPTGTPRPLRPEACR. A helical transmembrane segment spans residues 190–210; sequence IWAPLAGICAVLLLSLVITLI. Cysteine 211 carries S-palmitoyl cysteine lipidation. Over 211–236 the chain is Cytoplasmic; the sequence is CCHRNRRRVCKCPRPLVKPRPSEKFV.

In terms of assembly, forms disulfide-linked heterodimers with CD8B at the cell surface. Also forms homodimers in several cell types including NK-cells or peripheral blood T-lymphocytes. Interacts with the MHC class I HLA-A/B2M dimer. Interacts with LCK in a zinc-dependent manner. Post-translationally, palmitoylated, but association with CD8B seems to be more important for the enrichment of CD8A in lipid rafts. In terms of processing, O-glycosylated. Phosphorylated in cytotoxic T-lymphocytes (CTLs) following activation.

It is found in the cell membrane. Integral membrane glycoprotein that plays an essential role in the immune response and serves multiple functions in responses against both external and internal offenses. In T-cells, functions primarily as a coreceptor for MHC class I molecule:peptide complex. The antigens presented by class I peptides are derived from cytosolic proteins while class II derived from extracellular proteins. Interacts simultaneously with the T-cell receptor (TCR) and the MHC class I proteins presented by antigen presenting cells (APCs). In turn, recruits the Src kinase LCK to the vicinity of the TCR-CD3 complex. LCK then initiates different intracellular signaling pathways by phosphorylating various substrates ultimately leading to lymphokine production, motility, adhesion and activation of cytotoxic T-lymphocytes (CTLs). This mechanism enables CTLs to recognize and eliminate infected cells and tumor cells. In NK-cells, the presence of CD8A homodimers at the cell surface provides a survival mechanism allowing conjugation and lysis of multiple target cells. CD8A homodimer molecules also promote the survival and differentiation of activated lymphocytes into memory CD8 T-cells. This Rattus norvegicus (Rat) protein is T-cell surface glycoprotein CD8 alpha chain (Cd8a).